Reading from the N-terminus, the 561-residue chain is Dihydroxy-acid dehydratase (561 aa).

C50 lines the [2Fe-2S] cluster pocket. Residue D82 participates in Mg(2+) binding. Residue C123 participates in [2Fe-2S] cluster binding. The Mg(2+) site is built by D124 and K125. K125 bears the N6-carboxylysine mark. Position 195 (C195) interacts with [2Fe-2S] cluster. E447 is a Mg(2+) binding site. Catalysis depends on S473, which acts as the Proton acceptor.

The protein belongs to the IlvD/Edd family. In terms of assembly, homodimer. Requires [2Fe-2S] cluster as cofactor. Mg(2+) serves as cofactor.

It catalyses the reaction (2R)-2,3-dihydroxy-3-methylbutanoate = 3-methyl-2-oxobutanoate + H2O. The catalysed reaction is (2R,3R)-2,3-dihydroxy-3-methylpentanoate = (S)-3-methyl-2-oxopentanoate + H2O. Its pathway is amino-acid biosynthesis; L-isoleucine biosynthesis; L-isoleucine from 2-oxobutanoate: step 3/4. It participates in amino-acid biosynthesis; L-valine biosynthesis; L-valine from pyruvate: step 3/4. Its function is as follows. Functions in the biosynthesis of branched-chain amino acids. Catalyzes the dehydration of (2R,3R)-2,3-dihydroxy-3-methylpentanoate (2,3-dihydroxy-3-methylvalerate) into 2-oxo-3-methylpentanoate (2-oxo-3-methylvalerate) and of (2R)-2,3-dihydroxy-3-methylbutanoate (2,3-dihydroxyisovalerate) into 2-oxo-3-methylbutanoate (2-oxoisovalerate), the penultimate precursor to L-isoleucine and L-valine, respectively. The chain is Dihydroxy-acid dehydratase from Chloroflexus aurantiacus (strain ATCC 29366 / DSM 635 / J-10-fl).